We begin with the raw amino-acid sequence, 220 residues long: Small ribosomal subunit protein uS3 (220 aa).

Residues 38-106 (IRNFINKKLQ…QVHINIVEIK (69 aa)) enclose the KH type-2 domain.

This sequence belongs to the universal ribosomal protein uS3 family. In terms of assembly, part of the 30S ribosomal subunit. Forms a tight complex with proteins S10 and S14.

Functionally, binds the lower part of the 30S subunit head. Binds mRNA in the 70S ribosome, positioning it for translation. The chain is Small ribosomal subunit protein uS3 from Lacticaseibacillus paracasei (strain ATCC 334 / BCRC 17002 / CCUG 31169 / CIP 107868 / KCTC 3260 / NRRL B-441) (Lactobacillus paracasei).